The primary structure comprises 950 residues: Protocadherin alpha-3 (950 aa).

An N-terminal signal peptide occupies residues 1-29 (MLFSWREDPGAQCLLLSLLLLAASEVGSG). Cadherin domains are found at residues 30 to 133 (QLHY…APVF), 134 to 242 (PMSV…APAF), 243 to 350 (ERTI…VPEL), 351 to 455 (VIHS…APAF), 456 to 565 (SQSE…APAL), and 581 to 678 (VPRS…APKA). The Extracellular portion of the chain corresponds to 30-697 (QLHYSVSEEA…GPEAALVDVN (668 aa)). N-linked (GlcNAc...) asparagine glycans are attached at residues asparagine 257 and asparagine 265. Asparagine 548 carries N-linked (GlcNAc...) asparagine glycosylation. A helical membrane pass occupies residues 698–718 (VYLIVAICAVSSLLVLTLLLY). Topologically, residues 719-950 (TALRCSAPPT…GNSTTDNSDQ (232 aa)) are cytoplasmic. PXXP repeat units follow at residues 734–737 (PGKP) and 774–777 (PSLP). The 6 X 4 AA repeats of P-X-X-P stretch occupies residues 734–894 (PGKPTLVCSS…PDKFIIPGSP (161 aa)). Disordered regions lie at residues 777 to 806 (PPCP…NPDW), 831 to 856 (GPGG…EVSP), and 869 to 889 (FKYG…DKFI). Residues 782–797 (SRDREEKQDVDVDLSA) show a composition bias toward basic and acidic residues. PXXP repeat units lie at residues 799–802 (PRQP), 832–835 (PGGP), 873–876 (PGNP), and 891–894 (PGSP). Positions 901 to 950 (QEPANSQIDKSDFITFGKKEETKKKKKKKKGNKTQEKKEKGNSTTDNSDQ) are disordered. Over residues 909 to 923 (DKSDFITFGKKEETK) the composition is skewed to basic and acidic residues.

Its subcellular location is the cell membrane. In terms of biological role, potential calcium-dependent cell-adhesion protein. May be involved in the establishment and maintenance of specific neuronal connections in the brain. This is Protocadherin alpha-3 (PCDHA3) from Pan troglodytes (Chimpanzee).